A 207-amino-acid chain; its full sequence is Thymidylate kinase (207 aa).

9-16 lines the ATP pocket; the sequence is GGEGCGKS.

It belongs to the thymidylate kinase family.

The enzyme catalyses dTMP + ATP = dTDP + ADP. Its function is as follows. Phosphorylation of dTMP to form dTDP in both de novo and salvage pathways of dTTP synthesis. The polypeptide is Thymidylate kinase (Dehalococcoides mccartyi (strain ATCC BAA-2266 / KCTC 15142 / 195) (Dehalococcoides ethenogenes (strain 195))).